A 208-amino-acid polypeptide reads, in one-letter code: 3-demethoxyubiquinol 3-hydroxylase (208 aa).

Fe cation contacts are provided by glutamate 57, glutamate 87, histidine 90, glutamate 139, glutamate 171, and histidine 174.

It belongs to the COQ7 family. Requires Fe cation as cofactor.

The protein localises to the cell membrane. It catalyses the reaction a 5-methoxy-2-methyl-3-(all-trans-polyprenyl)benzene-1,4-diol + AH2 + O2 = a 3-demethylubiquinol + A + H2O. It participates in cofactor biosynthesis; ubiquinone biosynthesis. Its function is as follows. Catalyzes the hydroxylation of 2-nonaprenyl-3-methyl-6-methoxy-1,4-benzoquinol during ubiquinone biosynthesis. This Burkholderia pseudomallei (strain 668) protein is 3-demethoxyubiquinol 3-hydroxylase.